The chain runs to 376 residues: 28S rRNA (uridine-N(3))-methyltransferase (376 aa).

Disordered regions lie at residues 1–33 (MAERGRKRPCGPGEHGQRIEWRKWKQQKKEEKK) and 49–71 (AQEEQAKRLEEEEAAAEKEDRGR). The span at 15 to 33 (HGQRIEWRKWKQQKKEEKK) shows a compositional bias: basic and acidic residues. Positions 289, 292, 312, 341, and 342 each coordinate S-adenosyl-L-homocysteine. 4 residues coordinate S-adenosyl-L-methionine: Arg-292, Gly-312, Asn-341, and Thr-342.

It belongs to the class IV-like SAM-binding methyltransferase superfamily. As to quaternary structure, interacts with INCA1.

Its subcellular location is the cytoplasm. It is found in the cytoskeleton. It localises to the spindle. The protein localises to the chromosome. The protein resides in the centromere. Its subcellular location is the kinetochore. It is found in the microtubule organizing center. It localises to the centrosome. The catalysed reaction is uridine in 28S rRNA + S-adenosyl-L-methionine = N(3)-methyluridine in 28S rRNA + S-adenosyl-L-homocysteine + H(+). S-adenosyl-L-methionine-dependent methyltransferase that specifically methylates the N3 position of a uridine in 28S rRNA. Required for association of the centrosomes with the poles of the bipolar mitotic spindle during metaphase. Also involved in chromosome alignment. May promote centrosome maturation probably by recruiting A-kinase anchor protein AKAP9 to centrosomes in early mitosis. Binds specifically to miRNA MIR145 hairpin, regulates MIR145 expression at a postranscriptional level. The protein is 28S rRNA (uridine-N(3))-methyltransferase of Homo sapiens (Human).